We begin with the raw amino-acid sequence, 494 residues long: Protein nucleotidyltransferase YdiU (494 aa).

G101, G103, R104, K123, D135, G136, R186, and R193 together coordinate ATP. The active-site Proton acceptor is D262. Residues N263 and D272 each coordinate Mg(2+). D272 lines the ATP pocket.

It belongs to the SELO family. Mg(2+) serves as cofactor. The cofactor is Mn(2+).

It catalyses the reaction L-seryl-[protein] + ATP = 3-O-(5'-adenylyl)-L-seryl-[protein] + diphosphate. It carries out the reaction L-threonyl-[protein] + ATP = 3-O-(5'-adenylyl)-L-threonyl-[protein] + diphosphate. The enzyme catalyses L-tyrosyl-[protein] + ATP = O-(5'-adenylyl)-L-tyrosyl-[protein] + diphosphate. The catalysed reaction is L-histidyl-[protein] + UTP = N(tele)-(5'-uridylyl)-L-histidyl-[protein] + diphosphate. It catalyses the reaction L-seryl-[protein] + UTP = O-(5'-uridylyl)-L-seryl-[protein] + diphosphate. It carries out the reaction L-tyrosyl-[protein] + UTP = O-(5'-uridylyl)-L-tyrosyl-[protein] + diphosphate. Functionally, nucleotidyltransferase involved in the post-translational modification of proteins. It can catalyze the addition of adenosine monophosphate (AMP) or uridine monophosphate (UMP) to a protein, resulting in modifications known as AMPylation and UMPylation. The sequence is that of Protein nucleotidyltransferase YdiU from Chromohalobacter salexigens (strain ATCC BAA-138 / DSM 3043 / CIP 106854 / NCIMB 13768 / 1H11).